The primary structure comprises 309 residues: Protease HtpX homolog (309 aa).

The next 2 helical transmembrane spans lie at 15–35 and 54–74; these read NAVLTTYCVIFAFIGLLVDVI and IFPTITVIMFLVAFVVIVVCI. His-165 contacts Zn(2+). Glu-166 is a catalytic residue. His-169 contributes to the Zn(2+) binding site. 2 helical membrane-spanning segments follow: residues 181-201 and 213-233; these read VGILSNIMLLVANFSVYFFMG and MILLVLQIVLPFLTLILQMYL. Residue Glu-238 coordinates Zn(2+).

Belongs to the peptidase M48B family. The cofactor is Zn(2+).

The protein resides in the cell inner membrane. The sequence is that of Protease HtpX homolog from Helicobacter acinonychis (strain Sheeba).